Here is a 264-residue protein sequence, read N- to C-terminus: Apolipoprotein A-I (264 aa).

Positions 1-18 are cleaved as a signal peptide; it reads MKAVVLTVAVFFLTGSQA. 2 repeat units span residues 67–88 and 89–110. Positions 67 to 264 are 10 X approximate tandem repeats; that stretch reads LKLLDNWDSL…DEATKKLTTQ (198 aa). Methionine sulfoxide is present on Met-109. The 3; half-length repeat unit spans residues 111–121; that stretch reads KDLEEVKLKVQ. Tandem repeats lie at residues 122–143, 144–165, and 166–187. The 7; truncated repeat unit spans residues 188–207; the sequence is PYSDELRQRLAARLEALKES. Repeat 8 spans residues 208-229; the sequence is SSLADYQAKATEHLSALGEKAK. One copy of the 9; half-length repeat lies at 230 to 240; the sequence is PALEDLRQGLL. Residues 241–264 form repeat 10; sequence PVLENLKMSFWSAVDEATKKLTTQ.

This sequence belongs to the apolipoprotein A1/A4/E family. In terms of assembly, homodimer. Interacts with APOA1BP and CLU. Component of a sperm activating protein complex (SPAP), consisting of APOA1, an immunoglobulin heavy chain, an immunoglobulin light chain and albumin. Interacts with NDRG1. Interacts with SCGB3A2. Interacts with NAXE and YJEFN3. Post-translationally, glycosylated. Palmitoylated. In terms of processing, phosphorylation sites are present in the extracellular medium.

It localises to the secreted. In terms of biological role, participates in the reverse transport of cholesterol from tissues to the liver for excretion by promoting cholesterol efflux from tissues and by acting as a cofactor for the lecithin cholesterol acyltransferase (LCAT). As part of the SPAP complex, activates spermatozoa motility. This chain is Apolipoprotein A-I (ApoA1), found in Marmota monax (Woodchuck).